The sequence spans 288 residues: ATP synthase gamma chain (288 aa).

Belongs to the ATPase gamma chain family. In terms of assembly, F-type ATPases have 2 components, CF(1) - the catalytic core - and CF(0) - the membrane proton channel. CF(1) has five subunits: alpha(3), beta(3), gamma(1), delta(1), epsilon(1). CF(0) has three main subunits: a, b and c.

The protein resides in the cell inner membrane. Produces ATP from ADP in the presence of a proton gradient across the membrane. The gamma chain is believed to be important in regulating ATPase activity and the flow of protons through the CF(0) complex. This chain is ATP synthase gamma chain, found in Rickettsia akari (strain Hartford).